Reading from the N-terminus, the 436-residue chain is Methylenetetrahydrofolate--tRNA-(uracil-5-)-methyltransferase TrmFO (436 aa).

9–14 (GAGLAG) serves as a coordination point for FAD.

The protein belongs to the MnmG family. TrmFO subfamily. FAD is required as a cofactor.

The protein localises to the cytoplasm. It carries out the reaction uridine(54) in tRNA + (6R)-5,10-methylene-5,6,7,8-tetrahydrofolate + NADH + H(+) = 5-methyluridine(54) in tRNA + (6S)-5,6,7,8-tetrahydrofolate + NAD(+). The enzyme catalyses uridine(54) in tRNA + (6R)-5,10-methylene-5,6,7,8-tetrahydrofolate + NADPH + H(+) = 5-methyluridine(54) in tRNA + (6S)-5,6,7,8-tetrahydrofolate + NADP(+). Its function is as follows. Catalyzes the folate-dependent formation of 5-methyl-uridine at position 54 (M-5-U54) in all tRNAs. This is Methylenetetrahydrofolate--tRNA-(uracil-5-)-methyltransferase TrmFO from Ligilactobacillus salivarius (strain UCC118) (Lactobacillus salivarius).